A 138-amino-acid chain; its full sequence is Small ribosomal subunit protein uS11c (138 aa).

Belongs to the universal ribosomal protein uS11 family. Part of the 30S ribosomal subunit.

It is found in the plastid. This chain is Small ribosomal subunit protein uS11c, found in Cuscuta obtusiflora (Peruvian dodder).